The following is a 496-amino-acid chain: Coiled-coil domain-containing protein 77 (496 aa).

Positions 1-42 (MDFSPPHGLRGGRSPSLQDTTISSSHTQKNGGDSTPLPPINE) are disordered. Polar residues predominate over residues 15–33 (PSLQDTTISSSHTQKNGGD). A coiled-coil region spans residues 51–113 (RELLEYYRKK…KALSDMQVYL (63 aa)). The tract at residues 170 to 208 (QRTVQSGDPFDRKVQRSGRAGVKQVPLKAPGKQDRTKAA) is disordered. A coiled-coil region spans residues 214–495 (QILLLQVEAL…IYGLENELRI (282 aa)).

The chain is Coiled-coil domain-containing protein 77 (ccdc77) from Xenopus laevis (African clawed frog).